A 232-amino-acid chain; its full sequence is Ribonuclease 3 (232 aa).

An RNase III domain is found at 5-134; that stretch reads QTVLKNHFAI…FLGALLLDKD (130 aa). A Mg(2+)-binding site is contributed by Glu-47. Residue Asp-51 is part of the active site. Residues Asp-120 and Glu-123 each contribute to the Mg(2+) site. Residue Glu-123 is part of the active site. The DRBM domain occupies 160 to 229; sequence DYKTHLQELL…AKNAVEKGLD (70 aa).

The protein belongs to the ribonuclease III family. Homodimer. It depends on Mg(2+) as a cofactor.

The protein resides in the cytoplasm. The catalysed reaction is Endonucleolytic cleavage to 5'-phosphomonoester.. Its function is as follows. Digests double-stranded RNA. Involved in the processing of primary rRNA transcript to yield the immediate precursors to the large and small rRNAs (23S and 16S). Processes some mRNAs, and tRNAs when they are encoded in the rRNA operon. Processes pre-crRNA and tracrRNA of type II CRISPR loci if present in the organism. The polypeptide is Ribonuclease 3 (Streptococcus pneumoniae serotype 4 (strain ATCC BAA-334 / TIGR4)).